We begin with the raw amino-acid sequence, 214 residues long: Protein OPG176 (214 aa).

Belongs to the orthopoxvirus OPG176 family. Tetramer. Interacts with host MYD88, TRF4, TICAM2 and MAL.

In terms of biological role, BCL2-like protein which disrupts the host immune response by inhibiting the TLR4 signaling pathway leading to NF-kappa-B activation. Acts close to the plasma membrane and targets several host TIR-domain containing adapter proteins including MYD88, TIRAP, TRIF and TICAM2. In turn, blocks the host NF-kappa-B and TRIF-mediated IRF3 activation. In Homo sapiens (Human), this protein is Protein OPG176 (OPG176).